Here is a 572-residue protein sequence, read N- to C-terminus: Cytochrome P450 monooxygenase xilC (572 aa).

C515 lines the heme pocket.

Belongs to the cytochrome P450 family. Requires heme as cofactor.

It functions in the pathway secondary metabolite biosynthesis. In terms of biological role, cytochrome P450 monooxygenase; part of the gene cluster that mediates the biosynthesis of the 6-methyl-2-pyrone derivative xylariolide D. XilC hydroxylates the 5-alkyl-6-methyl-2-pyrone backbone called prexylariolide D, produced by the highly reducing polyketide synthase xilA, on its side chain to form xylariolide D. The protein is Cytochrome P450 monooxygenase xilC of Penicillium rubens (strain ATCC 28089 / DSM 1075 / NRRL 1951 / Wisconsin 54-1255) (Penicillium chrysogenum).